The sequence spans 398 residues: Chalcone synthase (398 aa).

C167 is an active-site residue.

Belongs to the thiolase-like superfamily. Chalcone/stilbene synthases family.

The enzyme catalyses (E)-4-coumaroyl-CoA + 3 malonyl-CoA + 3 H(+) = 2',4,4',6'-tetrahydroxychalcone + 3 CO2 + 4 CoA. It functions in the pathway secondary metabolite biosynthesis; flavonoid biosynthesis. Its function is as follows. The primary product of this enzyme is 4,2',4',6'-tetrahydroxychalcone (also termed naringenin-chalcone or chalcone) which can under specific conditions spontaneously isomerize into naringenin. The protein is Chalcone synthase (CHS) of Callistephus chinensis (China aster).